Consider the following 304-residue polypeptide: D-alanine--D-alanine ligase (304 aa).

The ATP-grasp domain occupies K104–A299. Residue A130–T185 participates in ATP binding. 3 residues coordinate Mg(2+): D253, E266, and N268.

Belongs to the D-alanine--D-alanine ligase family. It depends on Mg(2+) as a cofactor. The cofactor is Mn(2+).

The protein localises to the cytoplasm. The enzyme catalyses 2 D-alanine + ATP = D-alanyl-D-alanine + ADP + phosphate + H(+). It participates in cell wall biogenesis; peptidoglycan biosynthesis. In terms of biological role, cell wall formation. This is D-alanine--D-alanine ligase from Azoarcus sp. (strain BH72).